An 832-amino-acid polypeptide reads, in one-letter code: Alpha-glucan phosphorylase, H isozyme (832 aa).

The residue at position 678 (Lys678) is an N6-(pyridoxal phosphate)lysine.

It belongs to the glycogen phosphorylase family. It depends on pyridoxal 5'-phosphate as a cofactor.

It is found in the cytoplasm. It catalyses the reaction [(1-&gt;4)-alpha-D-glucosyl](n) + phosphate = [(1-&gt;4)-alpha-D-glucosyl](n-1) + alpha-D-glucose 1-phosphate. Phosphorylase is an important allosteric enzyme in carbohydrate metabolism. Enzymes from different sources differ in their regulatory mechanisms and in their natural substrates. However, all known phosphorylases share catalytic and structural properties. This is Alpha-glucan phosphorylase, H isozyme from Triticum aestivum (Wheat).